A 1443-amino-acid polypeptide reads, in one-letter code: Cleavage and polyadenylation specificity factor subunit 1 (1443 aa).

Disordered regions lie at residues Pro-404–Lys-435, Glu-546–Arg-570, Gly-715–Phe-777, and Phe-901–Gly-921. Basic and acidic residues predominate over residues Glu-410–Ser-419. Ser-756 and Ser-766 each carry phosphoserine. A compositionally biased stretch (basic and acidic residues) spans Ser-758–Ala-775. The Nuclear localization signal signature appears at Lys-893–Pro-908.

This sequence belongs to the CPSF1 family. In terms of assembly, component of the cleavage and polyadenylation specificity factor (CPSF) complex, composed of CPSF1, CPSF2, CPSF3, CPSF4 and FIP1L1. Found in a complex with CPSF1, FIP1L1 and PAPOLA. Interacts with FIP1L1, TENT2/GLD2 and SRRM1. Interacts with TUT1; the interaction is direct and mediates the recruitment of the CPSF complex on the 3'UTR of selected pre-mRNAs. Post-translationally, the N-terminus is blocked. Widely expressed, with high expression in the retina.

It localises to the nucleus. The protein localises to the nucleoplasm. In terms of biological role, component of the cleavage and polyadenylation specificity factor (CPSF) complex that plays a key role in pre-mRNA 3'-end formation, recognizing the AAUAAA signal sequence and interacting with poly(A) polymerase and other factors to bring about cleavage and poly(A) addition. This subunit is involved in the RNA recognition step of the polyadenylation reaction. May play a role in eye morphogenesis and the development of retinal ganglion cell projections to the midbrain. This chain is Cleavage and polyadenylation specificity factor subunit 1 (CPSF1), found in Homo sapiens (Human).